We begin with the raw amino-acid sequence, 141 residues long: MEQTLSIIKPDSVGKAHIGEIVSIFEKAGLRIAAMKMVHLSVKEAEGFYAVHKERPFFQELVDFMISGPVVVMVLQGENAVARNRELMGATNPKEAAEGSIRALFGESIGVNAVHGSDSLENAAIEVSYFFAKTEIVNALA.

The ATP site is built by Lys9, Phe57, Arg85, Thr91, Arg102, and Asn112. His115 acts as the Pros-phosphohistidine intermediate in catalysis.

Belongs to the NDK family. Homotetramer. Requires Mg(2+) as cofactor.

It localises to the cytoplasm. It carries out the reaction a 2'-deoxyribonucleoside 5'-diphosphate + ATP = a 2'-deoxyribonucleoside 5'-triphosphate + ADP. The catalysed reaction is a ribonucleoside 5'-diphosphate + ATP = a ribonucleoside 5'-triphosphate + ADP. In terms of biological role, major role in the synthesis of nucleoside triphosphates other than ATP. The ATP gamma phosphate is transferred to the NDP beta phosphate via a ping-pong mechanism, using a phosphorylated active-site intermediate. The protein is Nucleoside diphosphate kinase of Chlamydia muridarum (strain MoPn / Nigg).